Here is a 286-residue protein sequence, read N- to C-terminus: Pyridoxal kinase PdxY (286 aa).

Substrate contacts are provided by residues S9 and T44 to Q45. Residues D111, E148, and K181 each coordinate ATP. Substrate is bound at residue D222.

It belongs to the pyridoxine kinase family. PdxY subfamily. As to quaternary structure, homodimer. Mg(2+) is required as a cofactor.

The catalysed reaction is pyridoxal + ATP = pyridoxal 5'-phosphate + ADP + H(+). The protein operates within cofactor metabolism; pyridoxal 5'-phosphate salvage; pyridoxal 5'-phosphate from pyridoxal: step 1/1. Pyridoxal kinase involved in the salvage pathway of pyridoxal 5'-phosphate (PLP). Catalyzes the phosphorylation of pyridoxal to PLP. This chain is Pyridoxal kinase PdxY, found in Actinobacillus pleuropneumoniae serotype 5b (strain L20).